A 171-amino-acid chain; its full sequence is Small ribosomal subunit protein uS5 (171 aa).

An S5 DRBM domain is found at leucine 16–valine 79.

Belongs to the universal ribosomal protein uS5 family. Part of the 30S ribosomal subunit. Contacts proteins S4 and S8.

In terms of biological role, with S4 and S12 plays an important role in translational accuracy. Located at the back of the 30S subunit body where it stabilizes the conformation of the head with respect to the body. The chain is Small ribosomal subunit protein uS5 from Desulfotalea psychrophila (strain LSv54 / DSM 12343).